Reading from the N-terminus, the 248-residue chain is Mannose-binding protein C (248 aa).

An N-terminal signal peptide occupies residues 1-20; it reads MSLFPSLPLLLLSVVAASYS. Residues 42–99 form the Collagen-like domain; the sequence is GINGFPGKDGRDGTKGEKGEPGQGLRGLQGPPGKLGPPGNPGPSGSPGPKGQKGDPGK. The tract at residues 43 to 111 is disordered; sequence INGFPGKDGR…DCDSSLAASE (69 aa). Proline 47 carries the 4-hydroxyproline modification. Basic and acidic residues predominate over residues 49–61; it reads KDGRDGTKGEKGE. Proline 73, proline 79, proline 82, and proline 88 each carry 4-hydroxyproline. Residues 75–87 are compositionally biased toward pro residues; the sequence is KLGPPGNPGPSGS. The span at 93–102 shows a compositional bias: basic and acidic residues; the sequence is QKGDPGKSPD. The stretch at 112–130 forms a coiled coil; sequence RKALQTEMARIKKWLTFSL. Residues 134–245 form the C-type lectin domain; it reads VGNKFFLTNG…CSSSHLAVCE (112 aa). 2 disulfides stabilise this stretch: cysteine 155-cysteine 244 and cysteine 222-cysteine 236.

As to quaternary structure, oligomeric complex of 3 or more homotrimers. Interacts with MASP1 and MASP2. Interacts with MEP1A and MEP1B and may inhibit their catalytic activity. Post-translationally, hydroxylation on proline residues within the sequence motif, GXPG, is most likely to be 4-hydroxy as this fits the requirement for 4-hydroxylation in vertebrates.

It is found in the secreted. Calcium-dependent lectin involved in innate immune defense. Binds mannose, fucose and N-acetylglucosamine on different microorganisms and activates the lectin complement pathway. Binds to late apoptotic cells, as well as to apoptotic blebs and to necrotic cells, but not to early apoptotic cells, facilitating their uptake by macrophages. The protein is Mannose-binding protein C (MBL2) of Pongo pygmaeus (Bornean orangutan).